The primary structure comprises 212 residues: MTQLADLRRTYVLGALSESDVAPDPMSQFKRWFDEAVTAKLPEPNAMSLATVDADGQPSARIVLLKGIDDRGFTFFTNYESRKGLDLAANPRAALLFHWVQLERQVRVEGRVEKVSDDESDAYFATRPLGSRVGAWASAQSREVPGRDVLEQREQEYRSKFGENPPRPPYWGGYRLVPTALEFWQGRPSRLHDRIAYRLQPGTGWQIVRLSP.

Residues 8–11 (RRTY) and Lys-66 contribute to the substrate site. FMN is bound by residues 61–66 (RIVLLK), 76–77 (FT), Arg-82, Lys-83, and Gln-105. Positions 123, 127, and 131 each coordinate substrate. FMN contacts are provided by residues 140–141 (QS) and Trp-184. Residue 190 to 192 (RLH) coordinates substrate. Arg-194 is a binding site for FMN.

The protein belongs to the pyridoxamine 5'-phosphate oxidase family. In terms of assembly, homodimer. Requires FMN as cofactor.

The catalysed reaction is pyridoxamine 5'-phosphate + O2 + H2O = pyridoxal 5'-phosphate + H2O2 + NH4(+). It catalyses the reaction pyridoxine 5'-phosphate + O2 = pyridoxal 5'-phosphate + H2O2. It functions in the pathway cofactor metabolism; pyridoxal 5'-phosphate salvage; pyridoxal 5'-phosphate from pyridoxamine 5'-phosphate: step 1/1. It participates in cofactor metabolism; pyridoxal 5'-phosphate salvage; pyridoxal 5'-phosphate from pyridoxine 5'-phosphate: step 1/1. Functionally, catalyzes the oxidation of either pyridoxine 5'-phosphate (PNP) or pyridoxamine 5'-phosphate (PMP) into pyridoxal 5'-phosphate (PLP). The polypeptide is Pyridoxine/pyridoxamine 5'-phosphate oxidase (Cupriavidus taiwanensis (strain DSM 17343 / BCRC 17206 / CCUG 44338 / CIP 107171 / LMG 19424 / R1) (Ralstonia taiwanensis (strain LMG 19424))).